A 242-amino-acid chain; its full sequence is 1-(5-phosphoribosyl)-5-[(5-phosphoribosylamino)methylideneamino] imidazole-4-carboxamide isomerase (242 aa).

Catalysis depends on Asp-10, which acts as the Proton acceptor. The active-site Proton donor is the Asp-132.

It belongs to the HisA/HisF family.

It is found in the cytoplasm. The enzyme catalyses 1-(5-phospho-beta-D-ribosyl)-5-[(5-phospho-beta-D-ribosylamino)methylideneamino]imidazole-4-carboxamide = 5-[(5-phospho-1-deoxy-D-ribulos-1-ylimino)methylamino]-1-(5-phospho-beta-D-ribosyl)imidazole-4-carboxamide. It participates in amino-acid biosynthesis; L-histidine biosynthesis; L-histidine from 5-phospho-alpha-D-ribose 1-diphosphate: step 4/9. The chain is 1-(5-phosphoribosyl)-5-[(5-phosphoribosylamino)methylideneamino] imidazole-4-carboxamide isomerase from Streptococcus sanguinis (strain SK36).